We begin with the raw amino-acid sequence, 150 residues long: D-aminoacyl-tRNA deacylase (150 aa).

The Gly-cisPro motif, important for rejection of L-amino acids motif lies at Gly138 to Pro139.

This sequence belongs to the DTD family. As to quaternary structure, homodimer.

Its subcellular location is the cytoplasm. It catalyses the reaction glycyl-tRNA(Ala) + H2O = tRNA(Ala) + glycine + H(+). The enzyme catalyses a D-aminoacyl-tRNA + H2O = a tRNA + a D-alpha-amino acid + H(+). An aminoacyl-tRNA editing enzyme that deacylates mischarged D-aminoacyl-tRNAs. Also deacylates mischarged glycyl-tRNA(Ala), protecting cells against glycine mischarging by AlaRS. Acts via tRNA-based rather than protein-based catalysis; rejects L-amino acids rather than detecting D-amino acids in the active site. By recycling D-aminoacyl-tRNA to D-amino acids and free tRNA molecules, this enzyme counteracts the toxicity associated with the formation of D-aminoacyl-tRNA entities in vivo and helps enforce protein L-homochirality. This Cytophaga hutchinsonii (strain ATCC 33406 / DSM 1761 / CIP 103989 / NBRC 15051 / NCIMB 9469 / D465) protein is D-aminoacyl-tRNA deacylase.